A 108-amino-acid chain; its full sequence is Large ribosomal subunit protein bL31B (108 aa).

The segment at proline 85 to lysine 108 is disordered. Basic residues predominate over residues lysine 97 to lysine 108.

This sequence belongs to the bacterial ribosomal protein bL31 family. Type B subfamily. As to quaternary structure, part of the 50S ribosomal subunit.

In Chlamydia muridarum (strain MoPn / Nigg), this protein is Large ribosomal subunit protein bL31B.